Consider the following 453-residue polypeptide: MELFPEKRILTVSQLTSLIRGVLEENFEHVWVEGEVSNLAMPASGHLYFTLKDAGAQIRCVMFRASARALKFRPRDGMGLIVRGRITVYEQRGDYQFLVEYLEPRGVGALQLAFIQLKEKLAKEGLFAEEHKRPIPSLPQRIGVVTSATGAAIHDILNVLNRRFANVEVLIRPVKVQGEGAADEIAEAIIDFNRYGAVDVMIVGRGGGSLEDLWAFNEEKVARAVHRSRIPIISAVGHEIDFTIADFVADLRAPTPSAAAELVVKSKEELASKVEFLRHRLIQTLRRILADAGGELESLSRALRDPTVLLGHLSQRLDDIFVRLERAIAGDLKDRGRMLEALKNHLRLRNPALKVERARERVIALSDKSEIALLRHVDRYREAAAVHSARLETLSPLGTLARGYSVALKLPERVPVKTFRQLALKDRLELLFHHGRAWCRVESLDEDASCSHE.

The protein belongs to the XseA family. In terms of assembly, heterooligomer composed of large and small subunits.

Its subcellular location is the cytoplasm. It catalyses the reaction Exonucleolytic cleavage in either 5'- to 3'- or 3'- to 5'-direction to yield nucleoside 5'-phosphates.. Functionally, bidirectionally degrades single-stranded DNA into large acid-insoluble oligonucleotides, which are then degraded further into small acid-soluble oligonucleotides. The polypeptide is Exodeoxyribonuclease 7 large subunit (Geobacter metallireducens (strain ATCC 53774 / DSM 7210 / GS-15)).